The following is a 187-amino-acid chain: Elongation factor P (187 aa).

This sequence belongs to the elongation factor P family.

The protein resides in the cytoplasm. Its pathway is protein biosynthesis; polypeptide chain elongation. In terms of biological role, involved in peptide bond synthesis. Stimulates efficient translation and peptide-bond synthesis on native or reconstituted 70S ribosomes in vitro. Probably functions indirectly by altering the affinity of the ribosome for aminoacyl-tRNA, thus increasing their reactivity as acceptors for peptidyl transferase. This chain is Elongation factor P, found in Thermodesulfovibrio yellowstonii (strain ATCC 51303 / DSM 11347 / YP87).